Reading from the N-terminus, the 197-residue chain is Guanylate kinase (197 aa).

In terms of domain architecture, Guanylate kinase-like spans 9 to 188; the sequence is GRLVVFSAPS…AVEAVILAIS (180 aa). 16-23 serves as a coordination point for ATP; it reads APSGTGKS.

Belongs to the guanylate kinase family.

It localises to the cytoplasm. It carries out the reaction GMP + ATP = GDP + ADP. Essential for recycling GMP and indirectly, cGMP. This chain is Guanylate kinase, found in Chlorobium luteolum (strain DSM 273 / BCRC 81028 / 2530) (Pelodictyon luteolum).